We begin with the raw amino-acid sequence, 347 residues long: Cannabinoid receptor 2 (347 aa).

The Extracellular segment spans residues 1-33; it reads MEGCRETEVTNGSNGGLEFNPMKEYMILSSGQQ. Asn-11 is a glycosylation site (N-linked (GlcNAc...) asparagine). Residues 34–59 form a helical membrane-spanning segment; that stretch reads IAVAVLCTLMGLLSALENMAVLYIIL. At 60-71 the chain is on the cytoplasmic side; sequence SSRRLRRKPSYL. A helical transmembrane segment spans residues 72–92; that stretch reads FISSLAGADFLASVIFACNFV. The Extracellular portion of the chain corresponds to 93 to 104; sequence IFHVFHGVDSNA. Residues 105–129 form a helical membrane-spanning segment; that stretch reads IFLLKIGSVTMTFTASVGSLLLTAV. The Cytoplasmic portion of the chain corresponds to 130-149; the sequence is DRYLCLCYPPTYKALVTRGR. The chain crosses the membrane as a helical span at residues 150-172; the sequence is ALVALCVMWVLSALISYLPLMGW. Over 173-188 the chain is Extracellular; sequence TCCPSPCSELFPLIPN. A helical membrane pass occupies residues 189 to 214; it reads DYLLGWLLFIAILFSGIIYTYGYVLW. The Cytoplasmic portion of the chain corresponds to 215 to 246; that stretch reads KAHRHVATLAEHQDRQVPGIARMRLDVRLAKT. A helical membrane pass occupies residues 247 to 267; the sequence is LGLVLAVLLICWFPALALMGH. At 268 to 279 the chain is on the extracellular side; that stretch reads SLVTTLSDQVKE. A helical transmembrane segment spans residues 280–301; sequence AFAFCSMLCLVNSMVNPIIYAL. Residues 302 to 347 are Cytoplasmic-facing; that stretch reads RSGEIRSAAQHCLIGWKKYLQGLGPEGKEEGPRSSVTETEADVKTT. The tract at residues 326 to 347 is disordered; it reads PEGKEEGPRSSVTETEADVKTT. Residues Ser-335 and Ser-336 each carry the phosphoserine modification. Thr-338 bears the Phosphothreonine mark.

It belongs to the G-protein coupled receptor 1 family. In terms of tissue distribution, expressed by cells of hematopoietic origin. Expressed in skin in suprabasal layers and hair follicles, in brain by neurons and glial cells and by osteoblasts, osteocytes, osteoclasts (at protein level).

The protein localises to the cell membrane. It is found in the cell projection. Its subcellular location is the dendrite. It localises to the perikaryon. Heterotrimeric G protein-coupled receptor for endocannabinoid 2-arachidonoylglycerol mediating inhibition of adenylate cyclase. May function in inflammatory response, nociceptive transmission and bone homeostasis. The chain is Cannabinoid receptor 2 (Cnr2) from Mus musculus (Mouse).